The primary structure comprises 702 residues: Polyribonucleotide nucleotidyltransferase (702 aa).

Asp-485 and Asp-491 together coordinate Mg(2+). In terms of domain architecture, KH spans 552–611 (PKTSTLQIDPEKIRDVIGAGGKVINKIIADTGVKIDIKEDGLVYVSSAESEGVKEAVKII). The region spanning 621 to 689 (GEIYLGKVTK…SQGRINLSRK (69 aa)) is the S1 motif domain.

Belongs to the polyribonucleotide nucleotidyltransferase family. Mg(2+) serves as cofactor.

The protein resides in the cytoplasm. The enzyme catalyses RNA(n+1) + phosphate = RNA(n) + a ribonucleoside 5'-diphosphate. Involved in mRNA degradation. Catalyzes the phosphorolysis of single-stranded polyribonucleotides processively in the 3'- to 5'-direction. The sequence is that of Polyribonucleotide nucleotidyltransferase from Clostridium perfringens (strain SM101 / Type A).